Here is an 837-residue protein sequence, read N- to C-terminus: Amyloid-beta A4 precursor protein-binding family A member 1 (837 aa).

Disordered stretches follow at residues 1–93, 238–342, and 358–435; these read MNHL…DTAE, YDER…SKEK, and EEVK…ESRK. A compositionally biased stretch (acidic residues) spans 23 to 38; the sequence is ESVEADLEHPEVEEEQ. Residues serine 78, serine 242, serine 246, serine 248, serine 263, serine 280, and serine 285 each carry the phosphoserine modification. The munc-18-1 binding stretch occupies residues 226-314; it reads YRQEALGARL…TPAGGRPDSP (89 aa). A compositionally biased stretch (basic and acidic residues) spans 238–254; the sequence is YDERSDGESDSPEKEAE. Phosphothreonine is present on threonine 305. 2 positions are modified to phosphoserine: serine 313 and serine 367. Threonine 370 carries the phosphothreonine modification. Residues 373–436 form an LIN-2/CASK binding region; sequence EPKEPIWVMR…ASTNKESRKS (64 aa). Positions 387 to 398 are enriched in basic and acidic residues; that stretch reads PTRDCDDQRPMD. A compositionally biased stretch (low complexity) spans 399–418; that stretch reads GDSPSPGSSSPLGAESSSTS. Phosphoserine occurs at positions 401, 403, 408, and 568. The PID domain maps to 457-643; the sequence is DGIIFAANYL…LLNTQDMYND (187 aa). The interval 626-641 is autoinhibitory helix linker; the sequence is LSQKEYSDLLNTQDMY. PDZ domains lie at 656–742 and 747–822; these read DVFI…IVRC and TVLI…TMPA.

As to quaternary structure, part of a multimeric complex containing STXBP1 and STX1A. Interacts with STXBP1. Also part of the brain-specific heterotrimeric complex LIN-10/X11-alpha, LIN-2/CASK, and LIN7. Component of the brain-specific heterotrimeric complex (LIN-10-LIN-2-LIN-7 complex) composed of at least APBA1, CASK, and LIN7, which associates with the motor protein KIF17 to transport vesicles along microtubules. Within the complex, interacts (via PDZ domain) with the motor protein KIF17; the interaction is direct and is required for association of KIF17 with the cargo that is to be transported. Both isoform 1 and isoform 2 bind to the cytoplasmic domain of amyloid protein (APP). Interacts (via PDZ 1 and 2 domains) with FSPB. Isoform 2, but not isoform 1, interacts (via its truncated PID domain) with active, GTP-bound RAB6A and RAB6B. In terms of tissue distribution, brain and spinal cord. Isoform 2 is expressed in testis and brain, but not detected in lung, liver or spleen.

It localises to the cytoplasm. The protein localises to the perinuclear region. The protein resides in the nucleus. It is found in the golgi apparatus. Functionally, putative function in synaptic vesicle exocytosis by binding to Munc18-1, an essential component of the synaptic vesicle exocytotic machinery. May modulate processing of the amyloid-beta precursor protein (APP) and hence formation of APP-beta. Component of the LIN-10-LIN-2-LIN-7 complex, which associates with the motor protein KIF17 to transport vesicles containing N-methyl-D-aspartate (NMDA) receptor subunit NR2B along microtubules. This is Amyloid-beta A4 precursor protein-binding family A member 1 (APBA1) from Homo sapiens (Human).